The chain runs to 269 residues: Imidazole glycerol phosphate synthase subunit HisF (269 aa).

Active-site residues include Asp23 and Asp142.

The protein belongs to the HisA/HisF family. In terms of assembly, heterodimer of HisH and HisF.

The protein localises to the cytoplasm. The enzyme catalyses 5-[(5-phospho-1-deoxy-D-ribulos-1-ylimino)methylamino]-1-(5-phospho-beta-D-ribosyl)imidazole-4-carboxamide + L-glutamine = D-erythro-1-(imidazol-4-yl)glycerol 3-phosphate + 5-amino-1-(5-phospho-beta-D-ribosyl)imidazole-4-carboxamide + L-glutamate + H(+). It participates in amino-acid biosynthesis; L-histidine biosynthesis; L-histidine from 5-phospho-alpha-D-ribose 1-diphosphate: step 5/9. Its function is as follows. IGPS catalyzes the conversion of PRFAR and glutamine to IGP, AICAR and glutamate. The HisF subunit catalyzes the cyclization activity that produces IGP and AICAR from PRFAR using the ammonia provided by the HisH subunit. This is Imidazole glycerol phosphate synthase subunit HisF from Bordetella parapertussis (strain 12822 / ATCC BAA-587 / NCTC 13253).